The sequence spans 1201 residues: Transcription-repair-coupling factor (1201 aa).

A disordered region spans residues 1–27 (MRLLITLGPSGSTHGHSLHTDAGRRRG). Residues 670 to 831 (DMQKPEPMDR…MSGVRDMSII (162 aa)) form the Helicase ATP-binding domain. Position 683–690 (683–690 (GDVGYGKT)) interacts with ATP. The short motif at 784-787 (DEEQ) is the DEEQ box element. The Helicase C-terminal domain occupies 852–1006 (VVKEAIEREV…GFSIASHDLE (155 aa)).

In the N-terminal section; belongs to the UvrB family. It in the C-terminal section; belongs to the helicase family. RecG subfamily.

Its subcellular location is the cytoplasm. Functionally, couples transcription and DNA repair by recognizing RNA polymerase (RNAP) stalled at DNA lesions. Mediates ATP-dependent release of RNAP and its truncated transcript from the DNA, and recruitment of nucleotide excision repair machinery to the damaged site. This chain is Transcription-repair-coupling factor, found in Myxococcus xanthus.